The sequence spans 1718 residues: PR domain zinc finger protein 2 (1718 aa).

In terms of domain architecture, SET spans 28 to 141 (EEVRLFPSAV…PGEELLVWYN (114 aa)). Residues 155–335 (ERASARSKRS…TSEETLEDCS (181 aa)) form a disordered region. Over residues 159 to 173 (ARSKRSSPKSRKGKK) the composition is skewed to basic residues. Positions 189–202 (QLKTSEPDFTSANM) are enriched in polar residues. The span at 204 to 216 (DSAEGPKEDEEKP) shows a compositional bias: basic and acidic residues. Acidic residues predominate over residues 265–297 (DLGEEEEEEEEEDEEEEEDDDDDELEDEGEEEA). The interval 294 to 316 (EEEASMPNENSVKEPEIRCDEKP) is retinoblastoma protein binding. A compositionally biased stretch (basic and acidic residues) spans 304 to 327 (SVKEPEIRCDEKPEDLLEEPKTTS). A Glycyl lysine isopeptide (Lys-Gly) (interchain with G-Cter in SUMO2) cross-link involves residue K347. 2 consecutive C2H2-type zinc fingers follow at residues 360–382 (FPCQ…MHIH) and 390–412 (FKCK…ERRH). The interval 405-457 (RRRHERRHEAGLKRKPSQTLQPSEDLADGKASGENVASKDDSSPPSLGPDCLI) is disordered. S421 is subject to Phosphoserine. The C2H2-type 3 zinc finger occupies 483–506 (HPCKYCKKVFGTHTNMRRHQRRVH). Disordered regions lie at residues 513–550 (KGVR…EGEA) and 622–660 (EDLP…DPMV). Position 643 is a phosphoserine (S643). Residues K651, K690, and K692 each participate in a glycyl lysine isopeptide (Lys-Gly) (interchain with G-Cter in SUMO2) cross-link. Residues 729–797 (TSSRFKRRTS…GRDERETVSP (69 aa)) form a disordered region. Low complexity predominate over residues 738-748 (SSPPSSPQHSP). S743 is subject to Phosphoserine. Residue K774 forms a Glycyl lysine isopeptide (Lys-Gly) (interchain with G-Cter in SUMO2) linkage. A phosphoserine mark is found at S781, S785, and S796. Glycyl lysine isopeptide (Lys-Gly) (interchain with G-Cter in SUMO2) cross-links involve residues K866 and K879. The tract at residues 903–1083 (VENPADGTRS…SPPPLSAISS (181 aa)) is disordered. The span at 951–969 (LQTPSLSSGQLPPLLIPTD) shows a compositional bias: low complexity. Short sequence motifs (SH3-binding) lie at residues 970 to 979 (PSSPPPCPPV) and 985 to 998 (PPPP…LPAP). Over residues 970 to 997 (PSSPPPCPPVLTVATPPPPLLPTVPLPA) the composition is skewed to pro residues. Residues 1018-1027 (SPLPILSPTV) show a composition bias toward low complexity. The segment covering 1028–1038 (SPSPSPIPPVE) has biased composition (pro residues). The SH3-binding motif lies at 1028 to 1052 (SPSPSPIPPVEPLMSAASPGPPTLS). The span at 1042–1072 (SAASPGPPTLSSSSSSSSSSSSFSSSSSSSS) shows a compositional bias: low complexity. 3 C2H2-type zinc fingers span residues 1134–1156 (FVCN…LSIH), 1162–1185 (FKCE…FLLH), and 1191–1214 (FVCS…RDLH). Residues K1147 and K1151 each participate in a glycyl lysine isopeptide (Lys-Gly) (interchain with G-Cter in SUMO2) cross-link. The disordered stretch occupies residues 1244-1265 (HMQSLPEDPLETSKEEEELNDS). A compositionally biased stretch (acidic residues) spans 1251–1265 (DPLETSKEEEELNDS). Glycyl lysine isopeptide (Lys-Gly) (interchain with G-Cter in SUMO2) cross-links involve residues K1257 and K1281. The segment at 1333-1355 (IRCTKCGKGVDNMPELHKHILAC) adopts a C2H2-type 7; atypical zinc-finger fold. Residues 1455–1478 (HICPYCNREFTYIGSLNKHAAFSC) form a C2H2-type 8; atypical zinc finger. Disordered regions lie at residues 1478–1576 (CPKK…LRNS), 1589–1612 (GKKP…RSLH), and 1625–1652 (KSTL…VTRS). Residues 1486–1498 (PKKKVSHSSKKGG) show a composition bias toward basic residues. Residues 1499 to 1511 (HSSPASSDKNSNS) are compositionally biased toward low complexity. Composition is skewed to polar residues over residues 1525 to 1556 (QSMQ…SKQN) and 1599 to 1608 (HSAQLSSKTS). Over residues 1635–1645 (DRFNIKSRERS) the composition is skewed to basic and acidic residues.

The protein belongs to the class V-like SAM-binding methyltransferase superfamily. In terms of assembly, binds to the retinoblastoma protein (RB). Interacts with GATA3. Highly expressed in retinoblastoma cell lines and in brain tumors. Also expressed in a number of other cell lines and in brain, heart, skeletal muscle, liver and spleen. Isoform 1 is expressed in testis at much higher level than isoform 3.

Its subcellular location is the nucleus. The enzyme catalyses L-lysyl(9)-[histone H3] + 3 S-adenosyl-L-methionine = N(6),N(6),N(6)-trimethyl-L-lysyl(9)-[histone H3] + 3 S-adenosyl-L-homocysteine + 3 H(+). Functionally, S-adenosyl-L-methionine-dependent histone methyltransferase that specifically methylates 'Lys-9' of histone H3. May function as a DNA-binding transcription factor. Binds to the macrophage-specific TPA-responsive element (MTE) of the HMOX1 (heme oxygenase 1) gene and may act as a transcriptional activator of this gene. This chain is PR domain zinc finger protein 2 (PRDM2), found in Homo sapiens (Human).